Reading from the N-terminus, the 644-residue chain is uncharacterized protein (644 aa).

2 disordered regions span residues 1-35 and 48-106; these read MSSH…EYCS and GNSH…SHHN. The residue at position 28 (serine 28) is a Phosphoserine. Over residues 58–70 the composition is skewed to low complexity; that stretch reads NGASSSNNNVAKS. Polar residues predominate over residues 83–106; sequence YDSTSNSNEPISFNEPDSSNSHHN. Helical transmembrane passes span 131–151, 190–210, 218–238, 245–265, 286–306, 314–334, 398–418, 435–455, 522–542, 546–566, 583–603, and 614–634; these read ILPL…PLLF, AAFG…YGTM, LVLF…LYQS, YFVL…TVVA, LNFA…GFIV, YVFY…WLIL, VLLA…MGLL, LILS…FPLL, VWNA…LAVA, VALF…PCVQ, AAFA…YAFV, and NMIF…IFFM.

The protein localises to the membrane. This is an uncharacterized protein from Schizosaccharomyces pombe (strain 972 / ATCC 24843) (Fission yeast).